Reading from the N-terminus, the 167-residue chain is Small heat shock protein C1 (167 aa).

The region spanning 59 to 167 (PFYESNSIKS…EQDAKEIPIN (109 aa)) is the sHSP domain.

It belongs to the small heat shock protein (HSP20) family.

This Rickettsia bellii (strain RML369-C) protein is Small heat shock protein C1 (hspC1).